The sequence spans 434 residues: Perilipin-3 (434 aa).

Positions 1–22 (MSADGAEADGSTQVTVEEPVQQ) are disordered. Ser2 carries the post-translational modification N-acetylserine. Ser31 bears the Phosphoserine mark. An N6-acetyllysine modification is found at Lys65. The residue at position 91 (Ser91) is a Phosphoserine. Lys122 is covalently cross-linked (Glycyl lysine isopeptide (Lys-Gly) (interchain with G-Cter in SUMO1)). Phosphoserine is present on residues Ser130 and Ser148. The residue at position 170 (Thr170) is a Phosphothreonine. A phosphoserine mark is found at Ser175 and Ser179. Residue Thr216 is modified to Phosphothreonine. Phosphoserine occurs at positions 217 and 241. Phosphotyrosine is present on Tyr251. 2 coiled-coil regions span residues 252 to 280 (EHSL…SLME) and 353 to 377 (TNVK…SSIH).

The protein belongs to the perilipin family. In terms of assembly, homooligomer. Interacts with M6PR (via the cytoplasmic domain). Interacts with IGF2R (via the cytoplasmic domain). Post-translationally, phosphorylation at Tyr-251 by isoform 1 of CHKA (CHKalpha2) promotes dissociation from lipid droplets: dissociation is followed by recruitment of autophagosome machinery to lipid droplets and subsequent lipid droplet lipolysis.

Its subcellular location is the lipid droplet. It localises to the endosome membrane. The protein resides in the cytoplasm. Its function is as follows. Structural component of lipid droplets, which is required for the formation and maintenance of lipid storage droplets. Required for the transport of mannose 6-phosphate receptors (MPR) from endosomes to the trans-Golgi network. This Pongo abelii (Sumatran orangutan) protein is Perilipin-3 (PLIN3).